We begin with the raw amino-acid sequence, 856 residues long: Envelope glycoprotein gp160 (856 aa).

Residues 1–32 form the signal peptide; it reads MRVKEKYQHLWRWGWRWGTMLLGMLMICSATE. Residues 33 to 684 are Extracellular-facing; the sequence is KLWVTVYYGV…ITNWLWYIKL (652 aa). C54 and C74 are joined by a disulfide. N-linked (GlcNAc...) asparagine; by host glycosylation is found at N88, N136, N141, N156, N160, N186, N197, N230, N234, N241, N262, N276, N289, N295, N301, N332, N339, and N356. Disulfide bonds link C119–C205, C126–C196, C131–C157, C218–C247, and C228–C239. Residues 131-156 are V1; that stretch reads CTDLKNDTNTNSSSGRMIMEKGEIKN. Positions 157–196 are V2; that stretch reads CSFNISTSIRGKVQKEYAFFYKLDIIPIDNDTTSYKLTSC. The V3 stretch occupies residues 296 to 330; the sequence is CTRPNNNTRKRIRIQRGPGRAFVTIGKIGNMRQAH. A disulfide bridge links C296 with C331. The CD4-binding loop stretch occupies residues 364 to 374; it reads SSGGDPEIVTH. Intrachain disulfides connect C378-C445 and C385-C418. The V4 stretch occupies residues 385–418; it reads CNSTQLFNSTWFNSTWSTEGSNNTEGSDTITLPC. N-linked (GlcNAc...) asparagine; by host glycosylation is found at N386, N392, N397, N406, N448, and N463. 2 V5 regions span residues 461–471 and 463–471; these read SNNESEIFRPG and NESEIFRPG. A fusion peptide region spans residues 512–532; the sequence is AVGIGALFLGFLGAAGSTMGA. Positions 574–592 are immunosuppression; it reads KQLQARILAVERYLKDQQL. C598 and C604 are disulfide-bonded. N-linked (GlcNAc...) asparagine; by host glycans are attached at residues N611, N616, N624, N637, and N674. The stretch at 633–667 forms a coiled coil; that stretch reads REINNYTSLIHSLIEESQNQQEKNEQELLELDKWA. Residues 662–683 are MPER; binding to GalCer; that stretch reads ELDKWASLWNWFNITNWLWYIK. The chain crosses the membrane as a helical span at residues 685 to 705; the sequence is FIMIVGGLVGLRIVFAVLSIV. At 706–856 the chain is on the cytoplasmic side; the sequence is NRVRQGYSPL…IRQGLERILL (151 aa). A YXXL motif; contains endocytosis signal motif is present at residues 712-715; sequence YSPL. The interval 718–742 is disordered; the sequence is QTHLPTPRGPDRPEGIEEEGGERDR. 2 S-palmitoyl cysteine; by host lipidation sites follow: C764 and C837. The Di-leucine internalization motif motif lies at 855–856; that stretch reads LL.

Belongs to the HIV-1 env protein family. In terms of assembly, the mature envelope protein (Env) consists of a homotrimer of non-covalently associated gp120-gp41 heterodimers. The resulting complex protrudes from the virus surface as a spike. There seems to be as few as 10 spikes on the average virion. Interacts with host CD4, CCR5 and CXCR4. Gp120 also interacts with the C-type lectins CD209/DC-SIGN and CLEC4M/DC-SIGNR (collectively referred to as DC-SIGN(R)). Gp120 and gp41 interact with GalCer. Gp120 interacts with host ITGA4/ITGB7 complex; on CD4+ T-cells, this interaction results in rapid activation of integrin ITGAL/LFA-1, which facilitates efficient cell-to-cell spreading of HIV-1. Gp120 interacts with cell-associated heparan sulfate; this interaction increases virus infectivity on permissive cells and may be involved in infection of CD4- cells. As to quaternary structure, the mature envelope protein (Env) consists of a homotrimer of non-covalently associated gp120-gp41 heterodimers. The resulting complex protrudes from the virus surface as a spike. There seems to be as few as 10 spikes on the average virion. In terms of processing, palmitoylation of the transmembrane protein and of Env polyprotein (prior to its proteolytic cleavage) is essential for their association with host cell membrane lipid rafts. Palmitoylation is therefore required for envelope trafficking to classical lipid rafts, but not for viral replication. Highly glycosylated by host. The high number of glycan on the protein is reffered to as 'glycan shield' because it contributes to hide protein sequence from adaptive immune system. Post-translationally, specific enzymatic cleavages in vivo yield mature proteins. Envelope glycoproteins are synthesized as an inactive precursor that is heavily N-glycosylated and processed likely by host cell furin in the Golgi to yield the mature SU and TM proteins. The cleavage site between SU and TM requires the minimal sequence [KR]-X-[KR]-R. About 2 of the 9 disulfide bonds of gp41 are reduced by P4HB/PDI, following binding to CD4 receptor.

It localises to the virion membrane. It is found in the host cell membrane. The protein localises to the host endosome membrane. In terms of biological role, oligomerizes in the host endoplasmic reticulum into predominantly trimers. In a second time, gp160 transits in the host Golgi, where glycosylation is completed. The precursor is then proteolytically cleaved in the trans-Golgi and thereby activated by cellular furin or furin-like proteases to produce gp120 and gp41. Attaches the virus to the host lymphoid cell by binding to the primary receptor CD4. This interaction induces a structural rearrangement creating a high affinity binding site for a chemokine coreceptor like CXCR4 and/or CCR5. Acts as a ligand for CD209/DC-SIGN and CLEC4M/DC-SIGNR, which are respectively found on dendritic cells (DCs), and on endothelial cells of liver sinusoids and lymph node sinuses. These interactions allow capture of viral particles at mucosal surfaces by these cells and subsequent transmission to permissive cells. HIV subverts the migration properties of dendritic cells to gain access to CD4+ T-cells in lymph nodes. Virus transmission to permissive T-cells occurs either in trans (without DCs infection, through viral capture and transmission), or in cis (following DCs productive infection, through the usual CD4-gp120 interaction), thereby inducing a robust infection. In trans infection, bound virions remain infectious over days and it is proposed that they are not degraded, but protected in non-lysosomal acidic organelles within the DCs close to the cell membrane thus contributing to the viral infectious potential during DCs' migration from the periphery to the lymphoid tissues. On arrival at lymphoid tissues, intact virions recycle back to DCs' cell surface allowing virus transmission to CD4+ T-cells. Its function is as follows. Acts as a class I viral fusion protein. Under the current model, the protein has at least 3 conformational states: pre-fusion native state, pre-hairpin intermediate state, and post-fusion hairpin state. During fusion of viral and target intracellular membranes, the coiled coil regions (heptad repeats) assume a trimer-of-hairpins structure, positioning the fusion peptide in close proximity to the C-terminal region of the ectodomain. The formation of this structure appears to drive apposition and subsequent fusion of viral and target cell membranes. Complete fusion occurs in host cell endosomes and is dynamin-dependent, however some lipid transfer might occur at the plasma membrane. The virus undergoes clathrin-dependent internalization long before endosomal fusion, thus minimizing the surface exposure of conserved viral epitopes during fusion and reducing the efficacy of inhibitors targeting these epitopes. Membranes fusion leads to delivery of the nucleocapsid into the cytoplasm. In Homo sapiens (Human), this protein is Envelope glycoprotein gp160.